Reading from the N-terminus, the 207-residue chain is Peptidyl-tRNA hydrolase (207 aa).

A tRNA-binding site is contributed by tyrosine 15. Histidine 20 serves as the catalytic Proton acceptor. Residues phenylalanine 66, asparagine 68, and asparagine 114 each coordinate tRNA. The segment at 187–207 (HTTKPPRPKPARPATAESDKG) is disordered. The span at 198–207 (RPATAESDKG) shows a compositional bias: low complexity.

This sequence belongs to the PTH family. As to quaternary structure, monomer.

It localises to the cytoplasm. It catalyses the reaction an N-acyl-L-alpha-aminoacyl-tRNA + H2O = an N-acyl-L-amino acid + a tRNA + H(+). Functionally, hydrolyzes ribosome-free peptidyl-tRNAs (with 1 or more amino acids incorporated), which drop off the ribosome during protein synthesis, or as a result of ribosome stalling. Its function is as follows. Catalyzes the release of premature peptidyl moieties from peptidyl-tRNA molecules trapped in stalled 50S ribosomal subunits, and thus maintains levels of free tRNAs and 50S ribosomes. The protein is Peptidyl-tRNA hydrolase of Delftia acidovorans (strain DSM 14801 / SPH-1).